Consider the following 347-residue polypeptide: MNPLIMTTILTTVILGTLIVMMSSHWLLIWIGFEMNMLAIIPMLMKQHNPRSTEAATKYFFTQATASMLLMLAVLLNLMYSGQWTVMKLYNPTASMIMTMALTMKLGLAPFHFWVPEVTQGIPLSSGLILLTWQKLAPLTVLYTISPNINLTMLLTMSIASIAIGGWGGLNQTQLRKIMAYSSIAHMGWMTTILIYNPTMTLLNLVIYILMTTTMFMLFMTSSSTTTLSLSHMWNKTPMIVTITLATLLSLGGLPPLTGFMPKWMIIQELTKNNNIILPTIMAITALLNLFFYMRLTYATSLTMFPTTNNMKIKWQFENPKRLSLLTPMIVLSTLTLPPTPMIIILN.

The next 10 helical transmembrane spans lie at 13-33 (VILG…WIGF), 59-79 (YFFT…LNLM), 96-116 (MIMT…FWVP), 122-142 (IPLS…LTVL), 149-169 (INLT…GWGG), 178-198 (IMAY…IYNP), 200-220 (MTLL…MLFM), 240-260 (IVTI…LTGF), 276-296 (IILP…YMRL), and 325-345 (LLTP…MIII).

Belongs to the complex I subunit 2 family. In terms of assembly, core subunit of respiratory chain NADH dehydrogenase (Complex I) which is composed of 45 different subunits. Interacts with TMEM242.

The protein resides in the mitochondrion inner membrane. The enzyme catalyses a ubiquinone + NADH + 5 H(+)(in) = a ubiquinol + NAD(+) + 4 H(+)(out). Core subunit of the mitochondrial membrane respiratory chain NADH dehydrogenase (Complex I) which catalyzes electron transfer from NADH through the respiratory chain, using ubiquinone as an electron acceptor. Essential for the catalytic activity and assembly of complex I. The chain is NADH-ubiquinone oxidoreductase chain 2 from Molossus ater (Black mastiff bat).